A 508-amino-acid polypeptide reads, in one-letter code: Photosystem II CP47 reaction center protein (508 aa).

6 consecutive transmembrane segments (helical) span residues Ala21 to Ser36, Ile101 to Trp115, Gly140 to Phe156, Val203 to Ser218, Val237 to Val252, and Thr457 to Arg472.

It belongs to the PsbB/PsbC family. PsbB subfamily. In terms of assembly, PSII is composed of 1 copy each of membrane proteins PsbA, PsbB, PsbC, PsbD, PsbE, PsbF, PsbH, PsbI, PsbJ, PsbK, PsbL, PsbM, PsbT, PsbX, PsbY, PsbZ, Psb30/Ycf12, at least 3 peripheral proteins of the oxygen-evolving complex and a large number of cofactors. It forms dimeric complexes. The cofactor is Binds multiple chlorophylls. PSII binds additional chlorophylls, carotenoids and specific lipids..

Its subcellular location is the plastid. It is found in the chloroplast thylakoid membrane. In terms of biological role, one of the components of the core complex of photosystem II (PSII). It binds chlorophyll and helps catalyze the primary light-induced photochemical processes of PSII. PSII is a light-driven water:plastoquinone oxidoreductase, using light energy to abstract electrons from H(2)O, generating O(2) and a proton gradient subsequently used for ATP formation. The sequence is that of Photosystem II CP47 reaction center protein from Welwitschia mirabilis (Tree tumbo).